The primary structure comprises 364 residues: Glycine oxidase (364 aa).

FAD contacts are provided by residues 12-13 (VI), 32-33 (ER), 40-41 (AS), 45-47 (GGI), and Val-173. Arg-302 contacts substrate. 327-333 (HYRNGLV) contributes to the FAD binding site.

It belongs to the DAO family. ThiO subfamily. Monomer. The cofactor is FAD.

The catalysed reaction is glycine + O2 + H2O = glyoxylate + H2O2 + NH4(+). It catalyses the reaction sarcosine + O2 + H2O = methylamine + glyoxylate + H2O2. The protein operates within cofactor biosynthesis; thiamine diphosphate biosynthesis. Functionally, catalyzes the oxidation of glycine, leading to glyoxyl imine and hydrogen peroxide as primary products; glyoxyl imine is used for the biosynthesis of the thiazole ring of thiamine. Otherwise, glyoxyl imine is spontaneously hydrolyzed in water to produce glyoxylate and ammonia. Can also use sarcosine (N-methylglycine) as substrate. The chain is Glycine oxidase from Pseudomonas aeruginosa (strain ATCC 15692 / DSM 22644 / CIP 104116 / JCM 14847 / LMG 12228 / 1C / PRS 101 / PAO1).